The chain runs to 202 residues: MKVLVTGFEPFNGETINPSFEAIKMLPDEVEGAKIIKAKLPTVFRKSLCELEELISKENPDIVICVGQAAGRSKISIERVAINIDDAEINDNEGNKPKDEKIFVDGENAYFSNLPIKLMVKTIKEHNIPAEISNSAGTYVCNHVFYGLMYLIDKKFKNLKGGFIHVPFSHNQVLEKKNVPSMSLEDITNGLFYAIKGVLSEK.

Residues E78, C141, and H165 contribute to the active site.

Belongs to the peptidase C15 family. Homotetramer.

The protein resides in the cytoplasm. The enzyme catalyses Release of an N-terminal pyroglutamyl group from a polypeptide, the second amino acid generally not being Pro.. Its function is as follows. Removes 5-oxoproline from various penultimate amino acid residues except L-proline. This Thermosipho melanesiensis (strain DSM 12029 / CIP 104789 / BI429) protein is Pyrrolidone-carboxylate peptidase.